A 78-amino-acid chain; its full sequence is Acyl carrier protein (78 aa).

Residues Ser-2–Leu-77 form the Carrier domain. O-(pantetheine 4'-phosphoryl)serine is present on Ser-37.

This sequence belongs to the acyl carrier protein (ACP) family. 4'-phosphopantetheine is transferred from CoA to a specific serine of apo-ACP by AcpS. This modification is essential for activity because fatty acids are bound in thioester linkage to the sulfhydryl of the prosthetic group.

It is found in the cytoplasm. Its pathway is lipid metabolism; fatty acid biosynthesis. Functionally, carrier of the growing fatty acid chain in fatty acid biosynthesis. The protein is Acyl carrier protein of Acinetobacter baylyi (strain ATCC 33305 / BD413 / ADP1).